The chain runs to 243 residues: Beta-glucanase (243 aa).

The first 27 residues, 1 to 27 (MSYRVKRMLMLLVTGLFLSLSTFAASA), serve as a signal peptide directing secretion. Positions 29–243 (AQTGGSFYEP…SLHWVRYTKR (215 aa)) constitute a GH16 domain. Cys61 and Cys90 are disulfide-bonded. Residue Glu134 is the Nucleophile of the active site. Residue Glu138 is the Proton donor of the active site.

The protein belongs to the glycosyl hydrolase 16 family.

It carries out the reaction Hydrolysis of (1-&gt;4)-beta-D-glucosidic linkages in beta-D-glucans containing (1-&gt;3)- and (1-&gt;4)-bonds.. This chain is Beta-glucanase (bg1), found in Bacillus licheniformis.